Here is a 3256-residue protein sequence, read N- to C-terminus: Proliferation marker protein Ki-67 (3256 aa).

One can recognise an FHA domain in the interval 27–76 (CLFGRGIECDIRIQLPVVSKQHCKIEIHEQEAILHNFSSTNPTQVNGSVI). The interval 101-199 (SLQNGRKSTE…RNGRNAADPI (99 aa)) is disordered. Basic and acidic residues predominate over residues 107 to 122 (KSTEFPRKIREQEPAR). A phosphoserine mark is found at Ser-125, Ser-128, and Ser-166. Over residues 161-173 (NVKEDSTADDSKD) the composition is skewed to basic and acidic residues. Residues 174-183 (SVAQGTTNVH) are compositionally biased toward polar residues. Lys-245 participates in a covalent cross-link: Glycyl lysine isopeptide (Lys-Gly) (interchain with G-Cter in SUMO2). 3 positions are modified to phosphoserine: Ser-264, Ser-296, and Ser-308. Disordered regions lie at residues 271–426 (ATEK…RGSI) and 513–542 (RPEL…LVMH). Basic and acidic residues predominate over residues 314 to 324 (DQNKGKGRDVE). Residues Thr-328 and Thr-347 each carry the phosphothreonine modification. The span at 349–358 (VQYSQQQNSP) shows a compositional bias: polar residues. Phosphoserine occurs at positions 352, 357, and 374. Thr-401 carries the post-translational modification Phosphothreonine. Ser-411 is subject to Phosphoserine. The segment covering 414–425 (KPENLSSKTRGS) has biased composition (polar residues). Residues 495 to 678 (ESEGIPLKRR…AKQTQTKVIK (184 aa)) are positively charged patch (CP). The PP1-binding domain maps to 502–549 (KRRRVSFGGHLRPELFDENLPPNTPLKRGEAPTKRKSLVMHTPPVLKK). Residue Ser-538 is modified to Phosphoserine. Thr-543 is subject to Phosphothreonine. Residues 575-632 (SLVISPPAPSPRKTPVASDQRRRSCKTAPASSSKSQTEVPKRGGRKSGNLPSKRVSIS) form a disordered region. 2 positions are modified to phosphoserine: Ser-579 and Ser-584. A compositionally biased stretch (polar residues) spans 603–612 (PASSSKSQTE). Ser-648 bears the Phosphoserine mark. The segment at 674–707 (TKVIKHGPQRSMNKRQRRPATPKKPVGEVHSQFS) is disordered. Basic residues predominate over residues 676-694 (VIKHGPQRSMNKRQRRPAT). Thr-761 bears the Phosphothreonine mark. A disordered region spans residues 853–886 (SLETKTSDTETEPSKTVSTANRSGRSTEFRNIQK). A Phosphoserine modification is found at Ser-859. The segment covering 866–882 (SKTVSTANRSGRSTEFR) has biased composition (polar residues). Residues 1000–2928 (GKITKMPCQS…ASFQELSQTP (1929 aa)) are 16 X 122 AA approximate repeats. K167R repeat units lie at residues 1001 to 1112 (KITK…FQTP), 1123 to 1234 (KTTK…FQTP), 1245 to 1356 (KTTK…FQTP), 1367 to 1477 (KTTK…FQTP), 1488 to 1597 (KTTK…LFQT), and 1609 to 1720 (KTAK…FQTP). A Phosphothreonine modification is found at Thr-1017. Residues Lys-1022 and Lys-1035 each participate in a glycyl lysine isopeptide (Lys-Gly) (interchain with G-Cter in SUMO2) cross-link. Residues 1045-1073 (TRTSGETTHTHREPAGDGKSIRTFKESPK) are disordered. Over residues 1052 to 1072 (THTHREPAGDGKSIRTFKESP) the composition is skewed to basic and acidic residues. Ser-1071 carries the phosphoserine modification. Position 1091 is a phosphothreonine (Thr-1091). Lys-1093 participates in a covalent cross-link: Glycyl lysine isopeptide (Lys-Gly) (interchain with G-Cter in SUMO1); alternate. Lys-1093 participates in a covalent cross-link: Glycyl lysine isopeptide (Lys-Gly) (interchain with G-Cter in SUMO2); alternate. Ser-1098 bears the Phosphoserine mark. A disordered region spans residues 1109 to 1151 (FQTPGPSEESMTDEKTTKIACKSPPPESVDTPTSTKQWPKRSL). The residue at position 1111 (Thr-1111) is a Phosphothreonine. Ser-1131 carries the phosphoserine modification. Residue Thr-1139 is modified to Phosphothreonine. Ser-1142 bears the Phosphoserine mark. Position 1167 is a phosphothreonine (Thr-1167). The residue at position 1169 (Ser-1169) is a Phosphoserine. Thr-1176 is subject to Phosphothreonine. Residues Lys-1185 and Lys-1188 each participate in a glycyl lysine isopeptide (Lys-Gly) (interchain with G-Cter in SUMO2) cross-link. Thr-1193 carries the post-translational modification Phosphothreonine. Residue Ser-1207 is modified to Phosphoserine. Thr-1233 is modified (phosphothreonine). The segment at 1246–1276 (TTKIPCDSPQSDPVDTPTSTKQRPKRSIRKA) is disordered. Ser-1253 and Ser-1256 each carry phosphoserine. Residues 1253–1266 (SPQSDPVDTPTSTK) show a composition bias toward polar residues. Phosphothreonine occurs at positions 1261, 1298, 1315, and 1327. The tract at residues 1323–1518 (TENLTGSKRR…PQSKRSLRKV (196 aa)) is disordered. Position 1329 is a phosphoserine (Ser-1329). At Thr-1335 the chain carries Phosphothreonine. A Glycyl lysine isopeptide (Lys-Gly) (interchain with G-Cter in SUMO2) cross-link involves residue Lys-1337. Thr-1355 is subject to Phosphothreonine. Ser-1376 is modified (phosphoserine). Thr-1383 bears the Phosphothreonine mark. Ser-1386 bears the Phosphoserine mark. 2 stretches are compositionally biased toward basic and acidic residues: residues 1394-1406 (PLEK…ELSA) and 1418-1442 (THTD…KQKL). 2 positions are modified to phosphothreonine: Thr-1420 and Thr-1437. Phosphoserine is present on Ser-1496. The residue at position 1503 (Thr-1503) is a Phosphothreonine. Ser-1506 is subject to Phosphoserine. Phosphothreonine is present on Thr-1540. Tyr-1552 bears the Phosphotyrosine mark. 2 positions are modified to phosphothreonine: Thr-1557 and Thr-1569. Phosphoserine occurs at positions 1571 and 1617. Positions 1597-1675 (TRGHTEESMT…PTGDGKSMKA (79 aa)) are disordered. Lys-1639 carries the post-translational modification N6-acetyllysine. A Glycyl lysine isopeptide (Lys-Gly) (interchain with G-Cter in SUMO2) cross-link involves residue Lys-1643. A compositionally biased stretch (basic and acidic residues) spans 1660 to 1672 (THTHTEPTGDGKS). 2 positions are modified to phosphoserine: Ser-1679 and Ser-1689. Disordered stretches follow at residues 1689-1708 (SLTG…EVPE), 1717-1765 (FQTP…ADTE), 1771-1790 (FRKQ…PAVG), 1801-1824 (TPVQ…TRKE), and 1839-1886 (FQTP…KADV). A Glycyl lysine isopeptide (Lys-Gly) (interchain with G-Cter in SUMO2) cross-link involves residue Lys-1703. At Thr-1719 the chain carries Phosphothreonine. Ser-1721 carries the post-translational modification Phosphoserine. The span at 1722–1733 (HTKESMTNEKTT) shows a compositional bias: basic and acidic residues. K167R repeat units lie at residues 1731 to 1842 (KTTK…FQTP), 1854 to 1964 (TKKI…FQTP), 1975 to 2086 (KITE…FQTP), 2097 to 2204 (KTTK…FQTP), and 2215 to 2326 (KTTK…FQTP). Ser-1740 is modified (phosphoserine). Thr-1747, Thr-1764, Thr-1784, and Thr-1801 each carry phosphothreonine. A Phosphoserine modification is found at Ser-1815. A Phosphothreonine modification is found at Thr-1841. Ser-1861 and Ser-1864 each carry phosphoserine. The segment covering 1861–1874 (SPQSDPADTPTNTK) has biased composition (polar residues). Phosphothreonine occurs at positions 1869, 1897, 1906, and 1923. Ser-1937 is subject to Phosphoserine. A disordered region spans residues 1961–2002 (FQTPGHTEESMTDDKITEVSCKSPQPDPVKTPTSSKQRLKIS). Thr-1963 bears the Phosphothreonine mark. Over residues 1966–1977 (HTEESMTDDKIT) the composition is skewed to basic and acidic residues. Ser-1983 carries the post-translational modification Phosphoserine. An N6-acetyllysine modification is found at Lys-2005. A Glycyl lysine isopeptide (Lys-Gly) (interchain with G-Cter in SUMO1); alternate cross-link involves residue Lys-2009. A Glycyl lysine isopeptide (Lys-Gly) (interchain with G-Cter in SUMO2); alternate cross-link involves residue Lys-2009. The segment at 2017–2192 (KLTQTSGKTT…TPKGKAQPLE (176 aa)) is disordered. A phosphothreonine mark is found at Thr-2028 and Thr-2065. Composition is skewed to basic and acidic residues over residues 2028–2046 (THRE…KESA) and 2061–2070 (RWPRTPKEEA). Lys-2067 is covalently cross-linked (Glycyl lysine isopeptide (Lys-Gly) (interchain with G-Cter in SUMO1); alternate). Lys-2067 is covalently cross-linked (Glycyl lysine isopeptide (Lys-Gly) (interchain with G-Cter in SUMO2); alternate). Residue Ser-2072 is modified to Phosphoserine. Thr-2085 carries the post-translational modification Phosphothreonine. The span at 2087 to 2099 (DHTEESTTDDKTT) shows a compositional bias: basic and acidic residues. Position 2105 is a phosphoserine (Ser-2105). Residue Thr-2113 is modified to Phosphothreonine. A phosphoserine mark is found at Ser-2116 and Ser-2135. Residues 2145-2168 (HTDKVPGDEDKGINVFRETAKQKL) are compositionally biased toward basic and acidic residues. Phosphothreonine occurs at positions 2146, 2163, and 2203. The segment at 2205 to 2400 (ICTDKPTTHE…KPAVSDEKNI (196 aa)) is disordered. Residue Ser-2223 is modified to Phosphoserine. 2 positions are modified to phosphothreonine: Thr-2231 and Thr-2233. Ser-2239 is modified (phosphoserine). Thr-2259 is modified (phosphothreonine). A Phosphoserine modification is found at Ser-2261. Phosphothreonine occurs at positions 2268, 2285, 2325, 2328, and 2333. 5 K167R repeats span residues 2336-2447 (KTTK…FQTP), 2458-2569 (KITE…FSAP), 2580-2688 (KNTK…LSET), 2700-2805 (KATK…GFKD), and 2819-2928 (KTTK…SQTP). Residue Ser-2344 is modified to Phosphoserine. Thr-2352 and Thr-2389 each carry phosphothreonine. The residue at position 2395 (Ser-2395) is a Phosphoserine. At Thr-2406 the chain carries Phosphothreonine. Ser-2420 carries the phosphoserine modification. Phosphothreonine occurs at positions 2426 and 2446. Residues 2445–2480 (QTPGHTEESMTDDKITEVSCKSPQPESFKTSRSSKQ) are disordered. The segment covering 2449–2460 (HTEESMTDDKIT) has biased composition (basic and acidic residues). Positions 2463-2475 (SCKSPQPESFKTS) are enriched in polar residues. Residue Ser-2466 is modified to Phosphoserine. Lys-2492 participates in a covalent cross-link: Glycyl lysine isopeptide (Lys-Gly) (interchain with G-Cter in SUMO1). The interval 2497–2521 (AVSKLTRTSGETTQTHTEPTGDSKS) is disordered. Residues 2501-2514 (LTRTSGETTQTHTE) are compositionally biased toward polar residues. 3 positions are modified to phosphoserine: Ser-2505, Ser-2528, and Ser-2588. The interval 2570-3256 (GHTEESMTID…TRSHRDSEDI (687 aa)) is disordered. Basic and acidic residues-rich tracts occupy residues 2609 to 2618 (RKEVKEELSA), 2632 to 2644 (THKE…EGIK), and 2660 to 2675 (EPSR…KAQP). Lys-2613 is covalently cross-linked (Glycyl lysine isopeptide (Lys-Gly) (interchain with G-Cter in SUMO1); alternate). Lys-2613 participates in a covalent cross-link: Glycyl lysine isopeptide (Lys-Gly) (interchain with G-Cter in SUMO2); alternate. Ser-2638 carries the phosphoserine modification. Polar residues predominate over residues 2685–2696 (LSETSGHTQESL). Phosphoserine is present on Ser-2708. Lys-2734 participates in a covalent cross-link: Glycyl lysine isopeptide (Lys-Gly) (interchain with G-Cter in SUMO1); alternate. Lys-2734 participates in a covalent cross-link: Glycyl lysine isopeptide (Lys-Gly) (interchain with G-Cter in SUMO2); alternate. 2 stretches are compositionally biased toward basic and acidic residues: residues 2751 to 2770 (DADK…KESA) and 2810 to 2821 (HTEESMTDDKTT). Phosphoserine occurs at positions 2827, 2828, and 2838. A Glycyl lysine isopeptide (Lys-Gly) (interchain with G-Cter in SUMO1); alternate cross-link involves residue Lys-2852. Lys-2852 is covalently cross-linked (Glycyl lysine isopeptide (Lys-Gly) (interchain with G-Cter in SUMO2); alternate). Basic and acidic residues predominate over residues 2869 to 2881 (THTDKEPVGEGKG). Over residues 2941–2951 (SFTSAPKQTPD) the composition is skewed to polar residues. A Glycyl lysine isopeptide (Lys-Gly) (interchain with G-Cter in SUMO2) cross-link involves residue Lys-2967. Positions 2982–2991 (KSQSKSNTSL) are enriched in polar residues. N6-acetyllysine is present on Lys-2986. The segment covering 3029–3039 (KKQRVAPRARG) has biased composition (basic residues). 3034 to 3041 (APRARGKS) lines the ATP pocket. At Ser-3041 the chain carries Phosphoserine. 2 stretches are compositionally biased toward basic and acidic residues: residues 3071-3080 (KTNKEEHKLQ) and 3113-3124 (ERIEINRNEKKP). The residue at position 3128 (Ser-3128) is a Phosphoserine. Residues 3138 to 3154 (DGARKPIPRDKVTENKR) show a composition bias toward basic and acidic residues. The segment covering 3207-3223 (SQPAASTLESKSVQRVT) has biased composition (polar residues). Residues 3228–3241 (RCAENPKKAEDNVC) show a composition bias toward basic and acidic residues.

Interacts with KIF15. Interacts (via the FHA domain) with NIFK. Interacts with PPP1CC. Component of a complex at least composed of ZNF335, HCFC1, CCAR2, EMSY, MKI67, RBBP5, ASH2L and WDR5; the complex is formed as a result of interactions between components of a nuclear receptor-mediated transcription complex and a histone methylation complex. Interacts with ZNF335. Hyperphosphorylated by CDK1 in mitosis; hyperphosphorylatiom prevents undergoing liquid-liquid phase separation. Dephosphorylated by PPP1CC at the onset of anaphase. Dephosphorylated by protein phosphatase 2A (PP2A) at the onset of anaphase. Dephosphorylation by protein phosphatase 2A (PP2A) and simultaneous exposure of the positively charged patch (CP) during mitotic exit induce the RNA-dependent formation of a liquid-like condensed phase on the chromosome surface. In terms of processing, ubiquitinated by the APC/C complex after neuronal progenitors exit mitosis during brain development, leading to clearance from constitutive heterochromatin.

It localises to the chromosome. The protein resides in the nucleus. Its subcellular location is the nucleolus. Functionally, protein that associates with the surface of mitotic chromosomes and acts both as a chromosome repellent during early mitosis and chromosome attractant during late mitosis. Required to maintain individual mitotic chromosomes dispersed in the cytoplasm following nuclear envelope disassembly. During early mitosis, relocalizes from nucleoli to the chromosome surface where it forms extended brush structures that cover a substantial fraction of the chromosome surface. The MKI67 brush structure prevents chromosomes from collapsing into a single chromatin mass by forming a steric and electrostatic charge barrier: the protein has a high net electrical charge and acts as a surfactant, dispersing chromosomes and enabling independent chromosome motility. During mitotic anaphase, the MKI67 brush structure collapses and MKI67 switches from a chromosome repellent to a chromosome attractant to promote chromosome clustering and facilitate the exclusion of large cytoplasmic particles from the future nuclear space. Mechanistically, dephosphorylation during mitotic exit and simultaneous exposure of a conserved basic patch induce the RNA-dependent formation of a liquid-like condensed phase on the chromosome surface, promoting coalescence of neighboring chromosome surfaces and clustering of chromosomes. Binds premature ribosomal RNAs during anaphase; promoting liquid-liquid phase separation. Binds DNA, with a preference for supercoiled DNA and AT-rich DNA. Does not contribute to the internal structure of mitotic chromosomes. May play a role in chromatin organization; it is however unclear whether it plays a direct role in chromatin organization or whether it is an indirect consequence of its function in mitotic chromosome. The chain is Proliferation marker protein Ki-67 from Homo sapiens (Human).